The following is a 313-amino-acid chain: Olfactory receptor 4M1 (313 aa).

Topologically, residues 1–25 (MEPANDTTVTEFILTGLSQTREVQL) are extracellular. N5 is a glycosylation site (N-linked (GlcNAc...) asparagine). A helical membrane pass occupies residues 26–46 (VLFVIFLSFYLFILPVNILII). At 47 to 57 (CTIRLDSHLSS) the chain is on the cytoplasmic side. A helical membrane pass occupies residues 58 to 78 (PMYFLLANLAFLDIWYSSITA). The Extracellular segment spans residues 79-97 (PKMLVDFFVERKIISFGGC). C97 and C179 form a disulfide bridge. The chain crosses the membrane as a helical span at residues 98–118 (IAQLFFLHFVGASEMFLLTVM). At 119 to 142 (AFDRYAAICRPLHYATIMNRRLCC) the chain is on the cytoplasmic side. A helical transmembrane segment spans residues 143 to 163 (ILVALSWTGGFVHSIIQVALI). The Extracellular portion of the chain corresponds to 164 to 204 (VRLPFCGPNELDNYFCDITQVVRIACANTFLEEMVMIFSSG). The chain crosses the membrane as a helical span at residues 205–225 (LISVVCFIALLMSYAFLLTML). Residues 226-238 (KKHSSSGESTSRA) are Cytoplasmic-facing. Residues 239–259 (ISTCYSHITIVVLMFGPSIYI) form a helical membrane-spanning segment. The Extracellular portion of the chain corresponds to 260–270 (YARPFDSFSLD). A helical transmembrane segment spans residues 271 to 291 (KVVSVFHTVIFPLLNPIIYTL). The Cytoplasmic portion of the chain corresponds to 292-313 (RNKEVKAAMRKLVNRYIFCKEK).

The protein belongs to the G-protein coupled receptor 1 family. As to expression, highly expressed in liver but not in adipose tissue. Also expressed at high level in testis.

The protein localises to the cell membrane. Functionally, olfactory receptor that acts as a receptor of Asprosin hormone at the surface of hepatocytes to promote hepatocyte glucose release. Also binds Asprosin in the arcuate nucleus of the hypothalamus, thereby stimulating appetite by promoting orexigenic AgRP neuronal activity. In testis, Asprosin-binding promotes sperm progressive motility and enhances male fertility. The activity of this receptor is mediated by G proteins which activate adenylyl cyclase, resulting in an elevation of intracellular cAMP. This Mus musculus (Mouse) protein is Olfactory receptor 4M1.